A 252-amino-acid polypeptide reads, in one-letter code: MLPELLLARVLHPRAVICSFAIPGDPGDTCDTLSDRWGITIDIFKSLNPGVNCPNLVANMEYCVAGTVSPDTPSTTTTAKPTMTPTSTPTKTTTTSTATTTRAMTTTISSDAPSPTQPGLAKDCDKFHLVVSGDNCYSIQTKYGISTDQFKAWNPYINAECSNLWADYYVCVHVPGATISTSMPMPTPSGPQPQMPGIVSNCRKFHLIQAGDNCYTINQAVGITLAQFRSWNKNVNADCSNIWLGYYVCIGV.

The region spanning 20 to 64 (FAIPGDPGDTCDTLSDRWGITIDIFKSLNPGVNCPNLVANMEYCV) is the LysM 1 domain. Positions 71–98 (DTPSTTTTAKPTMTPTSTPTKTTTTSTA) are disordered. Residues 72-98 (TPSTTTTAKPTMTPTSTPTKTTTTSTA) are compositionally biased toward low complexity. LysM domains follow at residues 126 to 172 (KFHL…YVCV) and 204 to 250 (KFHL…YVCI).

This sequence belongs to the secreted LysM effector family.

The protein localises to the secreted. Its subcellular location is the cell wall. Functionally, secreted effector that binds two substrates, chitin and N-linked oligosaccharides associated with human skin glycoproteins. Could provide the pathogen with three important functions including shielding host cell wall chitin from the human immune system, shielding the pathogen's glycoproteins from host degradation and immune surveillance, and helping facilitate pathogen adhesion to human skin. This chain is Secreted LysM effector LysM1, found in Trichophyton rubrum (strain ATCC MYA-4607 / CBS 118892) (Athlete's foot fungus).